Consider the following 458-residue polypeptide: Cysteine--tRNA ligase (458 aa).

Position 33 (cysteine 33) interacts with Zn(2+). A 'HIGH' region motif is present at residues 35 to 45; that stretch reads PTVYDFAHIGN. Cysteine 221, histidine 246, and glutamate 250 together coordinate Zn(2+). Positions 279 to 283 match the 'KMSKS' region motif; that stretch reads KMSKS. Lysine 282 contacts ATP.

This sequence belongs to the class-I aminoacyl-tRNA synthetase family. Monomer. Zn(2+) is required as a cofactor.

It localises to the cytoplasm. It catalyses the reaction tRNA(Cys) + L-cysteine + ATP = L-cysteinyl-tRNA(Cys) + AMP + diphosphate. The chain is Cysteine--tRNA ligase from Rhizobium etli (strain ATCC 51251 / DSM 11541 / JCM 21823 / NBRC 15573 / CFN 42).